The primary structure comprises 369 residues: uncharacterized protein (369 aa).

Lysine 184 is modified (N6-(pyridoxal phosphate)lysine).

This sequence belongs to the class-V pyridoxal-phosphate-dependent aminotransferase family. The cofactor is pyridoxal 5'-phosphate.

This is an uncharacterized protein from Helicobacter pylori (strain J99 / ATCC 700824) (Campylobacter pylori J99).